We begin with the raw amino-acid sequence, 909 residues long: Golgin subfamily A member 6-like protein 2 (909 aa).

Positions 1-11 are enriched in pro residues; the sequence is MWPQPHLPPHP. 5 disordered regions span residues 1–88, 300–362, 381–408, 425–494, and 524–909; these read MWPQ…ASHQ, ERLR…EQEE, QEKQ…RLRE, KMRE…QRLP, and EEMW…QSSL. The span at 13-31 shows a compositional bias: basic and acidic residues; the sequence is MSEKTRQNKLAEAKKKFTD. Residues 53 to 77 show a composition bias toward polar residues; sequence NNGTNPETTTSEGCHSPEDTQQNRA. Residues 78-88 are compositionally biased toward basic and acidic residues; that stretch reads QLKEEKKASHQ. Residues 192–526 are a coiled coil; sequence HKKADRYIEE…EEKIRDQEEM (335 aa). Composition is skewed to basic and acidic residues over residues 425-478 and 524-542; these read KMRE…KQEE and EEMW…MREQ. The segment covering 607-620 has biased composition (acidic residues); it reads AGGEEDAGAGEEDM. Composition is skewed to gly residues over residues 641 to 654 and 676 to 689; these read GGGG…GEDA and GAGG…GEDV. Over residues 692 to 719 the composition is skewed to basic residues; that stretch reads GRRRCGSSRGCRNRRRSCGNTRRCRSRR. Residues 746–755 are compositionally biased toward low complexity; that stretch reads AGAEDVAAGG. Residues 757 to 766 show a composition bias toward acidic residues; that stretch reads DAGEEEDAGG. A compositionally biased stretch (gly residues) spans 791-871; it reads GAGGEDVGAG…AGGEDVGAGG (81 aa). Residues 872 to 892 are compositionally biased toward basic and acidic residues; that stretch reads DAREGGEDTRSEREDAGEAAR.

Belongs to the GOLGA6 family.

This Homo sapiens (Human) protein is Golgin subfamily A member 6-like protein 2 (GOLGA6L2).